Reading from the N-terminus, the 268-residue chain is Myeloid leukemia factor 1 (268 aa).

3 positions are modified to phosphoserine: Ser-8, Ser-32, and Ser-34. Disordered stretches follow at residues 44–66 (ISDG…SLTH) and 209–268 (GRHN…SNKK). The tract at residues 50-125 (RAHNRRGHND…IGDEPPKVFQ (76 aa)) is interaction with COPS3. Basic and acidic residues-rich tracts occupy residues 56 to 65 (GHNDGEDSLT) and 226 to 237 (PGSRELKRREKP).

The protein belongs to the MLF family. Interacts with CENPU. Also interacts with NRBP1/MADM, YWHAZ/14-3-3-zeta and HNRPUL2/MANP. NRBP1 recruits a serine kinase which phosphorylates both itself and MLF1. Phosphorylated MLF1 then binds to YWHAZ and is retained in the cytoplasm. Retained in the nucleus by binding to HNRPUL2. Binds to COPS3/CSN3 which is required for suppression of COP1 and activation of p53. Post-translationally, phosphorylation is required for binding to YWHAZ. Most abundant in testis, ovary, skeletal muscle, heart, kidney and colon. Low expression in spleen, thymus and peripheral blood leukocytes.

It is found in the cytoplasm. Its subcellular location is the nucleus. The protein resides in the cell projection. It localises to the cilium. The protein localises to the cytoskeleton. It is found in the cilium basal body. Functionally, involved in lineage commitment of primary hemopoietic progenitors by restricting erythroid formation and enhancing myeloid formation. Interferes with erythropoietin-induced erythroid terminal differentiation by preventing cells from exiting the cell cycle through suppression of CDKN1B/p27Kip1 levels. Suppresses COP1 activity via CSN3 which activates p53 and induces cell cycle arrest. Binds DNA and affects the expression of a number of genes so may function as a transcription factor in the nucleus. This chain is Myeloid leukemia factor 1 (MLF1), found in Homo sapiens (Human).